A 1107-amino-acid chain; its full sequence is Unconventional myosin-Ie (1107 aa).

One can recognise a Myosin motor domain in the interval 19–692; that stretch reads SGVDDMVLLS…SLFLLEEMRE (674 aa). 112-119 lines the ATP pocket; it reads GESGAGKT. The tract at residues 581–591 is actin-binding; it reads PHYIRCIKPNE. An IQ domain is found at 695–724; sequence YDGYARVIQKTWRKFVARKKYVQMREDASD. The TH1 domain occupies 730–922; it reads KERRRNSINR…NKVLQVSIGP (193 aa). The tract at residues 920-1052 is disordered; that stretch reads IGPGLPKNAR…KPQPKPKPQV (133 aa). 3 stretches are compositionally biased toward polar residues: residues 933 to 949, 977 to 989, and 998 to 1012; these read RNTV…NNNY, SGNQ…SLYT, and RQQS…QTPE. Position 1001 is a phosphoserine (serine 1001). The segment covering 1034-1051 has biased composition (pro residues); the sequence is RPPPAGGRPKPQPKPKPQ. The region spanning 1050–1107 is the SH3 domain; the sequence is PQVPQCKALYAYDAQDTDELSFNANDVIDIIKEDPSGWWTGRLRGKQGLFPNNYVTKI.

Belongs to the TRAFAC class myosin-kinesin ATPase superfamily. Myosin family. As to quaternary structure, interacts with CALM and F-actin. Interacts (via SH3 domain) with SYNJ1, DNM1 and DNM2. Interacts with ARL14EP. Interacts with CARMIL1. In terms of tissue distribution, detected in brain stem, brain cortex, cerebellum, stomach, colon, heart, lung, liver, spleen and kidney. Detected in utricle, cochlea, outer hair cell bundle cuticular plate and vestibular epithelia (at protein level). Detected in cochlea and vestibular tissues. Detected in kidney, lung, spleen and intestine.

The protein localises to the cytoplasm. It is found in the cytoskeleton. Its subcellular location is the cytoplasmic vesicle. The protein resides in the clathrin-coated vesicle. It localises to the cell junction. Myosins are actin-based motor molecules with ATPase activity. Unconventional myosins serve in intracellular movements. Their highly divergent tails bind to membranous compartments, which are then moved relative to actin filaments. Binds to membranes containing anionic phospholipids via its tail domain. Involved in clathrin-mediated endocytosis and intracellular movement of clathrin-coated vesicles. Required for normal morphology of the glomerular basement membrane, normal development of foot processes by kidney podocytes and normal kidney function. In dendritic cells, may control the movement of class II-containing cytoplasmic vesicles along the actin cytoskeleton by connecting them with the actin network via ARL14EP and ARL14. This is Unconventional myosin-Ie (Myo1e) from Rattus norvegicus (Rat).